Here is an 857-residue protein sequence, read N- to C-terminus: Phosphoenolpyruvate carboxylase (857 aa).

Active-site residues include His-144 and Lys-530.

It belongs to the PEPCase type 1 family. As to quaternary structure, homotetramer. The cofactor is Mg(2+). In terms of processing, the N-terminus is blocked.

The enzyme catalyses oxaloacetate + phosphate = phosphoenolpyruvate + hydrogencarbonate. Its function is as follows. Forms oxaloacetate, a four-carbon dicarboxylic acid source for the tricarboxylic acid cycle. This is Phosphoenolpyruvate carboxylase (ppc) from Thermus sp. (strain 71).